Consider the following 219-residue polypeptide: Proteasome subunit beta type-9 (219 aa).

The propeptide at 1 to 20 is removed in mature form; that stretch reads MLRAGAPTAGSFRTEEVHTG. The active-site Nucleophile is the threonine 21. Lysine 53 and lysine 109 each carry N6-acetyllysine.

Belongs to the peptidase T1B family. As to quaternary structure, the 26S proteasome consists of a 20S proteasome core and two 19S regulatory subunits. The 20S proteasome core is composed of 28 subunits that are arranged in four stacked rings, resulting in a barrel-shaped structure. The two end rings are each formed by seven alpha subunits, and the two central rings are each formed by seven beta subunits. The catalytic chamber with the active sites is on the inside of the barrel. Component of the immunoproteasome, where it displaces the equivalent housekeeping subunit PSMB6. Component of the spermatoproteasome, a form of the proteasome specifically found in testis. In terms of processing, autocleaved. The resulting N-terminal Thr residue of the mature subunit is responsible for the nucleophile proteolytic activity.

The protein localises to the cytoplasm. It localises to the nucleus. The catalysed reaction is Cleavage of peptide bonds with very broad specificity.. Functionally, the proteasome is a multicatalytic proteinase complex which is characterized by its ability to cleave peptides with Arg, Phe, Tyr, Leu, and Glu adjacent to the leaving group at neutral or slightly basic pH. The proteasome has an ATP-dependent proteolytic activity. This subunit is involved in antigen processing to generate class I binding peptides. In Mus terricolor (Earth-colored mouse), this protein is Proteasome subunit beta type-9 (Psmb9).